The chain runs to 493 residues: MVEIKKICCIGAGYVGGPTCSVIAHMCPEIRVTVVDVNEARINAWNSPTLPIYEPGLKEVVESCRGKNLFFSTNIDDAIREADLVFISVNTPTKTYGMGKGRAADLKYIEACARRIVQNSNGYKIVTEKSTVPVRAAESIRRIFDANTKPNLNLQVLSNPEFLAEGTAIKDLKNPDRVLIGGDETPEGQKAVRALCAVYEHWVPKEKILTTNTWSSELSKLAANAFLAQRISSINSISALCEATGADVEEVATAIGMDQRIGNKFLKASVGFGGSCFQKDVLNLVYLCEALNLPEVARYWQQVIDMNDYQRRRFASRIIDSLFNTVTDKKIAILGFAFKKDTGDTRESSSIYISKYLMDEGAHLHIYDPKVPREQIVVDLSHPGVSADDQVSRLVTISKDPYEACDGAHALVICTEWDMFKELDYERIHKKMLKPAFIFDGRRVLDGLHSELQTIGFQIETIGKKVSSKRIPYTPGEIPKFSLQDPPNKKPKV.

Residues 11-16 (GAGYVG), Asp-36, Arg-41, and 89-93 (VNTPT) contribute to the NAD(+) site. A disordered region spans residues 88–110 (SVNTPTKTYGMGKGRAADLKYIE). N6-acetyllysine is present on Lys-107. The segment at 129–135 (KSTVPVR) is allosteric switch region. 130-132 (STV) is an NAD(+) binding site. Glu-161 acts as the Proton donor/acceptor in catalysis. Residues 161–165 (EFLAE), 220–224 (KLAAN), Arg-260, and 267–273 (KASVGFG) contribute to the substrate site. Glu-165 provides a ligand contact to NAD(+). Catalysis depends on Lys-220, which acts as the Proton donor/acceptor. The active-site Nucleophile is Cys-276. 276–279 (CFQK) contributes to the NAD(+) binding site. The interval 321–325 (SLFNT) is important for formation of active hexamer structure. Residue 338–339 (FK) participates in substrate binding. Arg-346 is a binding site for NAD(+). Arg-442 contacts substrate. Residues 466-493 (VSSKRIPYTPGEIPKFSLQDPPNKKPKV) form a disordered region. Position 474 is a phosphothreonine (Thr-474).

The protein belongs to the UDP-glucose/GDP-mannose dehydrogenase family. In terms of assembly, homohexamer.

The enzyme catalyses UDP-alpha-D-glucose + 2 NAD(+) + H2O = UDP-alpha-D-glucuronate + 2 NADH + 3 H(+). Its pathway is nucleotide-sugar biosynthesis; UDP-alpha-D-glucuronate biosynthesis; UDP-alpha-D-glucuronate from UDP-alpha-D-glucose: step 1/1. With respect to regulation, UDP-alpha-D-xylose (UDX) acts as a feedback inhibitor. It binds at the same site as the substrate, but functions as allosteric inhibitor by triggering a conformation change that disrupts the active hexameric ring structure and gives rise to an inactive, horseshoe-shaped hexamer. Catalyzes the formation of UDP-alpha-D-glucuronate, a constituent of complex glycosaminoglycans. Required for the biosynthesis of chondroitin sulfate and heparan sulfate. Required for embryonic development via its role in the biosynthesis of glycosaminoglycans. Required for proper brain and neuronal development. In Mus musculus (Mouse), this protein is UDP-glucose 6-dehydrogenase (Ugdh).